The sequence spans 641 residues: Toxin TseL (641 aa).

As to quaternary structure, interacts with VgrG3; this interaction allows TseL secretion to target cells.

The protein localises to the secreted. In terms of biological role, toxin secreted by the type VI (T6SS) secretion system that acts on prokaryotic as well as eukaryotic target cells. This chain is Toxin TseL, found in Vibrio cholerae serotype O1 (strain ATCC 39315 / El Tor Inaba N16961).